The chain runs to 422 residues: O-methyltransferase kk1A (422 aa).

Asp277 lines the S-adenosyl-L-methionine pocket. His320 (proton acceptor) is an active-site residue.

The protein belongs to the class I-like SAM-binding methyltransferase superfamily. Cation-independent O-methyltransferase family.

Its pathway is secondary metabolite biosynthesis. Functionally, O-methyltransferase; part of the gene cluster that mediates the biosynthesis of KK-1, a novel cyclic depsipeptide with 10 residues which is a promising active compound with high activity against many plant pathogens, especially Botrytis cinerea. Within the pathway, kk1A is responsible for the O-methylation of tyrosine as a free amino acid before its activation as an aminoacyl-AMP by the corresponding A domain of kk1B. The nonribosomal peptide synthetase (NRPS) kk1B catalyzes the elongation and cyclization of the decapeptide chain composed of 1 D-lactic acid residue (D-Lac), 1 pipecolic acid residue (Pip), 1 aspartic acid residue (Asp), 1 isoleucine residue (Ile), 1 glycine residue (Gly), 1 tyrosine residue (Tyr) and 4 valine residues (Val). The Asp, Ile and 3 Val residues are N-methylated by the 5 methyltransferase domains from the NRPS (found in modules 3, 5, 6, 7 and 9), whereas the Tyr residue is O-methylated by the cluster encoded O-methyltransferase kk1A. The thioesterase kk1J is likely to be involved in the corrective mechanism of peptide chain synthesis. The D-lactate dehydrogenase kk1H is involved in the synthesis of D-lactic acid from pyruvic acid, which is recognized by the A domain of the first kk1B module. The pyrroline-5-carboxylate reductase kk1I is involved in the synthesis of the L-pipecolic acid residue of KK-1 from delta-1-pyrroline-5-carboxylate (P5C), a metabolic intermediate of lysine. It is still unclear how kk1C and kk1D are involved in the production of KK-1. The polypeptide is O-methyltransferase kk1A (Curvularia clavata).